Here is a 514-residue protein sequence, read N- to C-terminus: Probable lipid II flippase MurJ (514 aa).

14 consecutive transmembrane segments (helical) span residues 3–23 (ILKSLISVGIMTLISRIFGFF), 25–45 (DVLIAHIFGASMFTDAFFIAF), 92–112 (ILVLTTFVILGIIFSDYIIFI), 130–150 (LLKIMFPYILFISLSSLCSSI), 157–177 (FFIPSLSSSLLNISIIVFSFF), 186–206 (IISLAWSVMIGGFFQLFYQFP), 245–265 (ISLIFNTIFSSLLHSGSISWI), 271–291 (LIEFPIGIIGVSLSTILFTSF), 315–335 (LILSLPISVILFMFSKPLVII), 354–374 (LELYSFGLVSFILVKILVSAF), 386–406 (ISILTLFLTQLMNPFLIFYFQ), 409–429 (GLALSCSIASWINFFLLYWKL), 448–468 (LLIAVLVMTFFLIFMLYFIPS), and 481–501 (LFTILSISGIVYLIALHFLGI).

This sequence belongs to the MurJ/MviN family.

It is found in the cell inner membrane. It functions in the pathway cell wall biogenesis; peptidoglycan biosynthesis. Involved in peptidoglycan biosynthesis. Transports lipid-linked peptidoglycan precursors from the inner to the outer leaflet of the cytoplasmic membrane. In Buchnera aphidicola subsp. Schizaphis graminum (strain Sg), this protein is Probable lipid II flippase MurJ.